The following is a 65-amino-acid chain: Small ribosomal subunit protein bS21A (65 aa).

It belongs to the bacterial ribosomal protein bS21 family.

The sequence is that of Small ribosomal subunit protein bS21A from Francisella tularensis subsp. holarctica (strain LVS).